A 357-amino-acid polypeptide reads, in one-letter code: O-methyltransferase pgmB (357 aa).

Asp-206 contributes to the S-adenosyl-L-methionine binding site. His-256 (proton acceptor) is an active-site residue.

The protein belongs to the class I-like SAM-binding methyltransferase superfamily. Cation-independent O-methyltransferase family.

It participates in pigment biosynthesis. Its pathway is secondary metabolite biosynthesis. O-methyltransferase; part of the gene cluster that mediates the biosynthesis of pleosporalin A, ascomycone A, as well as a third cryptic naphthoquinone derived pigment, all responsible for the coloration of conidia. Specifically methylates position C-6 of the pgmA product 3-acetonyl-1,6,8-trihydroxy-2-naphthaldehyde to yield fusarubinaldehyde. The pathway begins with the biosynthesis of the cyclized heptaketide 3-acetonyl-1,6,8-trihydroxy-2-naphthaldehyde by the NR-PKS pgmA. The C-6 hydroxyl group is further methylated by the O-methyltransferase pgmB to yield fusarubinaldehyde which is in turn oxidized by the cytochrome P450 monooxygenase pgmC at C-9. The C-1 hydroxyl group is then methylated spontaneously. Although pgmE, pgmD and pgmH are essential for the production of pleosporalin A, it is not the case for the 2 other final products and it remains difficult to assign a specific function to each enzyme. PgmF and pgmG seem not to be involved in pigment biosynthesis although they were regulated by the cluster-specific transcription factor pgmR. The protein is O-methyltransferase pgmB of Aspergillus terreus (strain NIH 2624 / FGSC A1156).